The primary structure comprises 765 residues: MIRLIRGNNVPSLVFKRSLFVPSNSLTNKRKRRIPPLKPRSSNKEGGDIKQSRITDRNQTSRTVGVSEKLPTQIKKELKDLRSFTKVIAQHLKPEQENDSLTSAEKPDTSQLPPIDIEEATDDIFGQISGTKKSSVEVAPPPPPPGLDIPDEIKERLGLLSELLVPEKSSNSKLPEKQVENNWKLLLSQLDQAGGLSGLSKRTISKFFSKIPPKNLKGLIPIIENMYNKAEMSIPHPIYYMFVRSLTLGDKISDTQMQLIDKYFQEISKQTDLKIDHYETMILAQVKNNHMEKIDGILALMKTKNIEISKMIYTSIVRGYIFYQKDHQKALETFDSMKFLSQKTQPDEKVYTDVIVSCIMHREIEKALDLYYELKDKGMNVNQNLLSTLAKGCSRSKQFKTQAWNFLFQIYDHGWVPNLQTYEHMLYIAARDGDVELTRALFYKMLQTNSVTVRAFRYLILSYSKYVPPHKRKERYLILLNHKGQLFRENILQDVDFSKPIHGFPFLPSSHIPDSKFVLAESSAIWAHTVMNNPSFLRQQTLVASYVSIALELDDFTEFKNRFNSASYLNKDGIPKVREIEIIEPQQDEPTETVTATEQQNTSSNTSVIRSPILNQLQQNINDNQFKAPRDSYLYNLAIKAAGKFKNYGFAQEILHERGQFRKSNSFKSLSPKQQHQDDFQFAGYLVECWTNMNLLEDAYAVVLSSIDRFPWSWRELGVLNNAAMKLGSLELAEAVRKVAQVTQVKHHGKIKRQDFKTYVMKRGY.

A mitochondrion-targeting transit peptide spans 1–63 (MIRLIRGNNV…ITDRNQTSRT (63 aa)). Disordered stretches follow at residues 26–67 (LTNK…VGVS) and 92–114 (LKPEQENDSLTSAEKPDTSQLPP). The segment covering 42–56 (SNKEGGDIKQSRITD) has biased composition (basic and acidic residues). PPR repeat units lie at residues 274-308 (KIDHYETMILAQVKNNHMEKIDGILALMKTKNIEI), 309-344 (SKMIYTSIVRGYIFYQKDHQKALETFDSMKFLSQKT), 347-381 (DEKVYTDVIVSCIMHREIEKALDLYYELKDKGMNV), 382-417 (NQNLLSTLAKGCSRSKQFKTQAWNFLFQIYDHGWVP), and 418-452 (NLQTYEHMLYIAARDGDVELTRALFYKMLQTNSVT). Positions 585 to 609 (PQQDEPTETVTATEQQNTSSNTSVI) are disordered. Residues 592–609 (ETVTATEQQNTSSNTSVI) are compositionally biased toward polar residues. A PPR 6 repeat occupies 631 to 661 (DSYLYNLAIKAAGKFKNYGFAQEILHERGQF).

This sequence belongs to the CCM1 family. Binds to mitochondrial small subunit 15S rRNA.

Its subcellular location is the mitochondrion. Its function is as follows. Regulates mitochondrial small subunit maturation by controlling 15S rRNA 5'-end processing. Localizes to the 5' precursor of the 15S rRNA in a position that is subsequently occupied by mS47 in the mature yeast mtSSU. Uses structure and sequence-specific RNA recognition, binding to a single-stranded region of the precursor and specifically recognizing bases -6 to -1. The exchange of Ccm1 for mS47 is coupled to the irreversible removal of precursor rRNA that is accompanied by conformational changes of the mitoribosomal proteins uS5m and mS26. These conformational changes signal completion of 5'-end rRNA processing through protection of the mature 5'-end of the 15S rRNA and stabilization of mS47. The removal of the 5' precursor together with the dissociation of Ccm1 may be catalyzed by the 5'-3' exoribonuclease Pet127. Involved in the specific removal of group I introns in mitochondrial encoded transcripts. The sequence is that of Mitochondrial 15S rRNA processing factor CCM1 (CCM1) from Candida dubliniensis (strain CD36 / ATCC MYA-646 / CBS 7987 / NCPF 3949 / NRRL Y-17841) (Yeast).